The sequence spans 139 residues: Actin-depolymerizing factor 1 (139 aa).

In terms of domain architecture, ADF-H spans 5-139; that stretch reads ASGMAVHDDC…DLDVFRSRAN (135 aa). The residue at position 6 (S6) is a Phosphoserine; by CPK3.

Belongs to the actin-binding proteins ADF family. In terms of assembly, interacts with the 14-3-3-like protein GRF6/AFT1. Phosphorylation at Ser-6 by CPK3/CDPK6 inhibits actin-depolimerizing activity. Expressed in vascular tissues of all organs.

It is found in the cytoplasm. The protein localises to the cytoskeleton. Its function is as follows. Actin-depolymerizing protein. Stimulates F-actin depolymerization. Involved in plant development, cell organ expansion and flowering by controlling breakdown of thick actin cables. Severs actin filaments or bundles and promotes actin cytoskeleton disassembly. Binds monomeric actin (G-actin) with a marked preference for the ADP-loaded form and inhibits the rate of nucleotide exchange on G-actin. In Arabidopsis thaliana (Mouse-ear cress), this protein is Actin-depolymerizing factor 1 (ADF1).